A 156-amino-acid chain; its full sequence is Ribosomal RNA large subunit methyltransferase H (156 aa).

S-adenosyl-L-methionine contacts are provided by residues Leu73, Gly104, and 123–128; that span reads LSALTL.

Belongs to the RNA methyltransferase RlmH family. Homodimer.

Its subcellular location is the cytoplasm. The enzyme catalyses pseudouridine(1915) in 23S rRNA + S-adenosyl-L-methionine = N(3)-methylpseudouridine(1915) in 23S rRNA + S-adenosyl-L-homocysteine + H(+). In terms of biological role, specifically methylates the pseudouridine at position 1915 (m3Psi1915) in 23S rRNA. This Psychromonas ingrahamii (strain DSM 17664 / CCUG 51855 / 37) protein is Ribosomal RNA large subunit methyltransferase H.